We begin with the raw amino-acid sequence, 118 residues long: RNA guanine-N7 methyltransferase activating subunit (118 aa).

Thr2 is subject to N-acetylthreonine. The tract at residues 2–55 is interaction with RNMT; the sequence is TDTAEAVPNFEEMFASRFTENDKEYQEYLKRPPESPPIVEEWNSRAGGNQRNRG. Residues 30 to 118 are disordered; the sequence is LKRPPESPPI…YNQRPPYGYY (89 aa). Ser36 carries the post-translational modification Phosphoserine. The RNMT-activating domain motif lies at 36–42; the sequence is SPPIVEE. The segment covering 45–56 has biased composition (low complexity); that stretch reads SRAGGNQRNRGN. Residues 56-118 are RNA-binding; it reads NRLQDNRQFR…YNQRPPYGYY (63 aa). Positions 57–70 are enriched in basic and acidic residues; that stretch reads RLQDNRQFRGRDNR. Over residues 76-93 the composition is skewed to polar residues; that stretch reads DNRSNQWHGRSWGNNYPQ. Arg85 is modified (omega-N-methylarginine). Residue Ser86 is modified to Phosphoserine. The segment covering 98–109 has biased composition (low complexity); that stretch reads PYYPQQYGHYGY.

Belongs to the RAM family. As to quaternary structure, interacts with RNMT; this interaction enhances mRNA binding and cap methyltransferase activity.

It localises to the nucleus. In terms of biological role, regulatory subunit of the mRNA-capping methyltransferase RNMT:RAMAC complex that methylates the N7 position of the added guanosine to the 5'-cap structure of mRNAs. Promotes the recruitment of the methyl donor, S-adenosyl-L-methionine, to RNMT. Regulates RNMT expression by a post-transcriptional stabilizing mechanism. Binds RNA. The polypeptide is RNA guanine-N7 methyltransferase activating subunit (RAMAC) (Pongo abelii (Sumatran orangutan)).